Reading from the N-terminus, the 402-residue chain is Argininosuccinate synthase (402 aa).

ATP is bound at residue 9 to 17; the sequence is AYSGGLDTS. Tyr86 provides a ligand contact to L-citrulline. Gly116 lines the ATP pocket. L-aspartate is bound by residues Thr118, Asn122, and Asp123. Asn122 contacts L-citrulline. 5 residues coordinate L-citrulline: Arg126, Ser174, Ser183, Glu259, and Tyr271.

Belongs to the argininosuccinate synthase family. Type 1 subfamily. Homotetramer.

It is found in the cytoplasm. The catalysed reaction is L-citrulline + L-aspartate + ATP = 2-(N(omega)-L-arginino)succinate + AMP + diphosphate + H(+). It participates in amino-acid biosynthesis; L-arginine biosynthesis; L-arginine from L-ornithine and carbamoyl phosphate: step 2/3. This Geobacillus sp. (strain WCH70) protein is Argininosuccinate synthase.